Consider the following 143-residue polypeptide: Large ribosomal subunit protein uL11 (143 aa).

This sequence belongs to the universal ribosomal protein uL11 family. As to quaternary structure, part of the ribosomal stalk of the 50S ribosomal subunit. Interacts with L10 and the large rRNA to form the base of the stalk. L10 forms an elongated spine to which L12 dimers bind in a sequential fashion forming a multimeric L10(L12)X complex. One or more lysine residues are methylated.

In terms of biological role, forms part of the ribosomal stalk which helps the ribosome interact with GTP-bound translation factors. This chain is Large ribosomal subunit protein uL11, found in Marinobacter nauticus (strain ATCC 700491 / DSM 11845 / VT8) (Marinobacter aquaeolei).